A 192-amino-acid polypeptide reads, in one-letter code: Thymidine kinase (192 aa).

Residues 9 to 16 (SAMNAGKS) and 87 to 90 (DECQ) each bind ATP. Glu88 functions as the Proton acceptor in the catalytic mechanism. Residues Cys145, Cys147, Cys182, and His185 each contribute to the Zn(2+) site.

The protein belongs to the thymidine kinase family. As to quaternary structure, homotetramer.

The protein localises to the cytoplasm. The catalysed reaction is thymidine + ATP = dTMP + ADP + H(+). The polypeptide is Thymidine kinase (Vibrio parahaemolyticus serotype O3:K6 (strain RIMD 2210633)).